Reading from the N-terminus, the 195-residue chain is Pyruvoyl-dependent arginine decarboxylase AaxB (195 aa).

S53 is modified (pyruvic acid (Ser)).

It belongs to the pyruvoyl-dependent arginine decarboxylase family. Trimer of an alpha-beta dimer. The cofactor is pyruvate.

Its subcellular location is the cytoplasm. It catalyses the reaction L-arginine + H(+) = agmatine + CO2. Part of the AaxABC system, catalyzes the decarboxylation of L-arginine. The arginine uptake by the bacterium in the macrophage may be a virulence factor against the host innate immune response. This chain is Pyruvoyl-dependent arginine decarboxylase AaxB (aaxB), found in Chlamydia trachomatis serovar L2 (strain ATCC VR-902B / DSM 19102 / 434/Bu).